The primary structure comprises 642 residues: Threonine--tRNA ligase (642 aa).

The catalytic stretch occupies residues Asp239–Pro530. Residues Cys331, His382, and His507 each coordinate Zn(2+).

The protein belongs to the class-II aminoacyl-tRNA synthetase family. Homodimer. Zn(2+) is required as a cofactor.

It localises to the cytoplasm. It catalyses the reaction tRNA(Thr) + L-threonine + ATP = L-threonyl-tRNA(Thr) + AMP + diphosphate + H(+). In terms of biological role, catalyzes the attachment of threonine to tRNA(Thr) in a two-step reaction: L-threonine is first activated by ATP to form Thr-AMP and then transferred to the acceptor end of tRNA(Thr). Also edits incorrectly charged L-seryl-tRNA(Thr). This chain is Threonine--tRNA ligase, found in Lawsonia intracellularis (strain PHE/MN1-00).